The sequence spans 151 residues: Ribonuclease H (151 aa).

The 143-residue stretch at 1-143 (MEEYVIYTDG…VDRVARKEAA (143 aa)) folds into the RNase H type-1 domain. Asp9, Glu48, Asp71, and Asp135 together coordinate Mg(2+).

Belongs to the RNase H family. As to quaternary structure, monomer. Requires Mg(2+) as cofactor.

It is found in the cytoplasm. It carries out the reaction Endonucleolytic cleavage to 5'-phosphomonoester.. In terms of biological role, endonuclease that specifically degrades the RNA of RNA-DNA hybrids. The polypeptide is Ribonuclease H (Neorickettsia sennetsu (strain ATCC VR-367 / Miyayama) (Ehrlichia sennetsu)).